The chain runs to 205 residues: ATP phosphoribosyltransferase (205 aa).

The protein belongs to the ATP phosphoribosyltransferase family. Short subfamily. Heteromultimer composed of HisG and HisZ subunits.

The protein localises to the cytoplasm. The enzyme catalyses 1-(5-phospho-beta-D-ribosyl)-ATP + diphosphate = 5-phospho-alpha-D-ribose 1-diphosphate + ATP. The protein operates within amino-acid biosynthesis; L-histidine biosynthesis; L-histidine from 5-phospho-alpha-D-ribose 1-diphosphate: step 1/9. Its function is as follows. Catalyzes the condensation of ATP and 5-phosphoribose 1-diphosphate to form N'-(5'-phosphoribosyl)-ATP (PR-ATP). Has a crucial role in the pathway because the rate of histidine biosynthesis seems to be controlled primarily by regulation of HisG enzymatic activity. This Leptospira borgpetersenii serovar Hardjo-bovis (strain JB197) protein is ATP phosphoribosyltransferase.